A 124-amino-acid polypeptide reads, in one-letter code: Small ribosomal subunit protein uS12 (124 aa).

A disordered region spans residues 1–22 (MATINQLVRKPRSRKVAKSDVP). At aspartate 89 the chain carries 3-methylthioaspartic acid. Positions 104–124 (TAGVNDRRQGRSKYGAKRGKS) are disordered. Residues 113–124 (GRSKYGAKRGKS) are compositionally biased toward basic residues.

It belongs to the universal ribosomal protein uS12 family. Part of the 30S ribosomal subunit. Contacts proteins S8 and S17. May interact with IF1 in the 30S initiation complex.

Functionally, with S4 and S5 plays an important role in translational accuracy. Its function is as follows. Interacts with and stabilizes bases of the 16S rRNA that are involved in tRNA selection in the A site and with the mRNA backbone. Located at the interface of the 30S and 50S subunits, it traverses the body of the 30S subunit contacting proteins on the other side and probably holding the rRNA structure together. The combined cluster of proteins S8, S12 and S17 appears to hold together the shoulder and platform of the 30S subunit. In Hahella chejuensis (strain KCTC 2396), this protein is Small ribosomal subunit protein uS12.